A 464-amino-acid polypeptide reads, in one-letter code: Meiotic plaque component protein 54 (464 aa).

Residues 71 to 102 form a disordered region; that stretch reads SISTTITPNKSSLKSPRGKRASKNSFDNETKL. 3 coiled-coil regions span residues 99 to 119, 156 to 193, and 231 to 365; these read ETKLESKNETLKEVNDAVNRC, KAECERSKNAIDSLYYHEQLEKKELNEKSLQMAIDHLL, and SINS…LQTQ.

Interacts directly with SPO21/MPC70, NUD1, SPO74 and SPC42. Probable component of a spindle pole body (SPB) complex composed of ADY3, SSP1, DON1, MPC54, SPO21/MPC70, NUD1 and CNM67.

The protein resides in the prospore membrane. The protein localises to the cytoplasm. It is found in the cytoskeleton. Its subcellular location is the microtubule organizing center. It localises to the spindle pole body. The protein resides in the spindle pole. Functionally, involved in the pathway that organizes the shaping and sizing of the prospore membrane (PSM) during sporulation. In Saccharomyces cerevisiae (strain ATCC 204508 / S288c) (Baker's yeast), this protein is Meiotic plaque component protein 54 (MPC54).